Consider the following 324-residue polypeptide: tRNA dimethylallyltransferase (324 aa).

ATP is bound at residue 15–22; the sequence is GPTATGKS. 17–22 is a substrate binding site; that stretch reads TATGKS. The segment at 40–43 is interaction with substrate tRNA; sequence DSAQ.

The protein belongs to the IPP transferase family. As to quaternary structure, monomer. Mg(2+) serves as cofactor.

The enzyme catalyses adenosine(37) in tRNA + dimethylallyl diphosphate = N(6)-dimethylallyladenosine(37) in tRNA + diphosphate. In terms of biological role, catalyzes the transfer of a dimethylallyl group onto the adenine at position 37 in tRNAs that read codons beginning with uridine, leading to the formation of N6-(dimethylallyl)adenosine (i(6)A). This Moorella thermoacetica (strain ATCC 39073 / JCM 9320) protein is tRNA dimethylallyltransferase.